A 195-amino-acid chain; its full sequence is Orotate phosphoribosyltransferase (195 aa).

117–125 (EDITTTGGS) serves as a coordination point for 5-phospho-alpha-D-ribose 1-diphosphate. Thr121 and Arg149 together coordinate orotate.

It belongs to the purine/pyrimidine phosphoribosyltransferase family. PyrE subfamily. In terms of assembly, homodimer. The cofactor is Mg(2+).

The catalysed reaction is orotidine 5'-phosphate + diphosphate = orotate + 5-phospho-alpha-D-ribose 1-diphosphate. The protein operates within pyrimidine metabolism; UMP biosynthesis via de novo pathway; UMP from orotate: step 1/2. Catalyzes the transfer of a ribosyl phosphate group from 5-phosphoribose 1-diphosphate to orotate, leading to the formation of orotidine monophosphate (OMP). In Acidithiobacillus ferrooxidans (strain ATCC 53993 / BNL-5-31) (Leptospirillum ferrooxidans (ATCC 53993)), this protein is Orotate phosphoribosyltransferase.